Consider the following 491-residue polypeptide: Nucleoporin NUP42 (491 aa).

A C3H1-type zinc finger spans residues 1–25 (MAICNFFLQGRCRYGEKCWNEHPRG). 2 disordered regions span residues 23-82 (PRGG…SQRY) and 92-111 (TTWI…SGFG). The span at 33–64 (RYQSQNRYQEQSRYQEQSRYPEQSRYPEQNRY) shows a compositional bias: polar residues. FG repeat units lie at residues 110 to 111 (FG), 259 to 260 (FG), 302 to 303 (FG), 312 to 313 (FG), 333 to 334 (FG), 342 to 343 (FG), 363 to 364 (FG), 375 to 376 (FG), 379 to 380 (FG), and 410 to 411 (FG).

Probable component of the nuclear pore complex (NPC).

The protein localises to the nucleus. The protein resides in the nuclear pore complex. It localises to the nucleus membrane. In terms of biological role, required for the export of mRNAs containing poly(A) tails from the nucleus into the cytoplasm. The sequence is that of Nucleoporin NUP42 (nup42) from Xenopus laevis (African clawed frog).